Consider the following 203-residue polypeptide: Glycerol-3-phosphate acyltransferase (203 aa).

4 consecutive transmembrane segments (helical) span residues 6–26 (LTLL…AVLV), 82–102 (AISL…PIFF), 118–138 (APIG…LVLI), and 141–161 (YSSL…WWLD).

Belongs to the PlsY family. Probably interacts with PlsX.

It is found in the cell inner membrane. It catalyses the reaction an acyl phosphate + sn-glycerol 3-phosphate = a 1-acyl-sn-glycero-3-phosphate + phosphate. Its pathway is lipid metabolism; phospholipid metabolism. Its function is as follows. Catalyzes the transfer of an acyl group from acyl-phosphate (acyl-PO(4)) to glycerol-3-phosphate (G3P) to form lysophosphatidic acid (LPA). This enzyme utilizes acyl-phosphate as fatty acyl donor, but not acyl-CoA or acyl-ACP. This chain is Glycerol-3-phosphate acyltransferase, found in Shewanella sp. (strain MR-7).